The primary structure comprises 306 residues: Methionyl-tRNA formyltransferase (306 aa).

109–112 (SILP) contacts (6S)-5,6,7,8-tetrahydrofolate.

It belongs to the Fmt family.

It carries out the reaction L-methionyl-tRNA(fMet) + (6R)-10-formyltetrahydrofolate = N-formyl-L-methionyl-tRNA(fMet) + (6S)-5,6,7,8-tetrahydrofolate + H(+). Attaches a formyl group to the free amino group of methionyl-tRNA(fMet). The formyl group appears to play a dual role in the initiator identity of N-formylmethionyl-tRNA by promoting its recognition by IF2 and preventing the misappropriation of this tRNA by the elongation apparatus. The sequence is that of Methionyl-tRNA formyltransferase from Herpetosiphon aurantiacus (strain ATCC 23779 / DSM 785 / 114-95).